A 192-amino-acid polypeptide reads, in one-letter code: Protein GrpE (192 aa).

Basic and acidic residues predominate over residues 1–20; that stretch reads MEERNEQVVEEVKEEVKEAQ. Positions 1-34 are disordered; that stretch reads MEERNEQVVEEVKEEVKEAQVEEAVTSEDSEETV. Positions 25-34 are enriched in acidic residues; that stretch reads VTSEDSEETV.

Belongs to the GrpE family. Homodimer.

Its subcellular location is the cytoplasm. Functionally, participates actively in the response to hyperosmotic and heat shock by preventing the aggregation of stress-denatured proteins, in association with DnaK and GrpE. It is the nucleotide exchange factor for DnaK and may function as a thermosensor. Unfolded proteins bind initially to DnaJ; upon interaction with the DnaJ-bound protein, DnaK hydrolyzes its bound ATP, resulting in the formation of a stable complex. GrpE releases ADP from DnaK; ATP binding to DnaK triggers the release of the substrate protein, thus completing the reaction cycle. Several rounds of ATP-dependent interactions between DnaJ, DnaK and GrpE are required for fully efficient folding. The protein is Protein GrpE of Bacillus cereus (strain AH187).